The primary structure comprises 205 residues: Methylthioribulose-1-phosphate dehydratase (205 aa).

Residues histidine 96 and histidine 98 each contribute to the Zn(2+) site.

The protein belongs to the aldolase class II family. MtnB subfamily. Requires Zn(2+) as cofactor.

The catalysed reaction is 5-(methylsulfanyl)-D-ribulose 1-phosphate = 5-methylsulfanyl-2,3-dioxopentyl phosphate + H2O. The protein operates within amino-acid biosynthesis; L-methionine biosynthesis via salvage pathway; L-methionine from S-methyl-5-thio-alpha-D-ribose 1-phosphate: step 2/6. Its function is as follows. Catalyzes the dehydration of methylthioribulose-1-phosphate (MTRu-1-P) into 2,3-diketo-5-methylthiopentyl-1-phosphate (DK-MTP-1-P). The protein is Methylthioribulose-1-phosphate dehydratase of Exiguobacterium sp. (strain ATCC BAA-1283 / AT1b).